A 453-amino-acid chain; its full sequence is tRNA modification GTPase MnmE (453 aa).

Residues Arg-22, Glu-79, and Lys-119 each coordinate (6S)-5-formyl-5,6,7,8-tetrahydrofolate. A TrmE-type G domain is found at 215-376 (GMKVVIAGRP…LKLHLKSLMG (162 aa)). Asn-225 is a binding site for K(+). GTP contacts are provided by residues 225–230 (NAGKSS), 244–250 (TEIAGTT), 269–272 (DTAG), and 334–337 (NKAD). Residue Ser-229 participates in Mg(2+) binding. Positions 244, 246, and 249 each coordinate K(+). Position 250 (Thr-250) interacts with Mg(2+). Lys-453 contributes to the (6S)-5-formyl-5,6,7,8-tetrahydrofolate binding site.

It belongs to the TRAFAC class TrmE-Era-EngA-EngB-Septin-like GTPase superfamily. TrmE GTPase family. In terms of assembly, homodimer. Heterotetramer of two MnmE and two MnmG subunits. It depends on K(+) as a cofactor.

It localises to the cytoplasm. Exhibits a very high intrinsic GTPase hydrolysis rate. Involved in the addition of a carboxymethylaminomethyl (cmnm) group at the wobble position (U34) of certain tRNAs, forming tRNA-cmnm(5)s(2)U34. The chain is tRNA modification GTPase MnmE from Shewanella putrefaciens (strain CN-32 / ATCC BAA-453).